A 425-amino-acid polypeptide reads, in one-letter code: Sensor histidine kinase NarS (425 aa).

6 helical membrane-spanning segments follow: residues 42-62 (IASV…VVGT), 71-91 (IVLI…AYSA), 107-127 (LEPF…QLLS), 130-150 (GIYP…DVST), 155-175 (VVLA…PVML), and 181-201 (PETI…LMVV). The 202-residue stretch at 224–425 (QTMTASEVLQ…HVCVELPLKR (202 aa)) folds into the Histidine kinase domain. His241 is modified (phosphohistidine; by autocatalysis).

Autophosphorylated on His-241.

The protein resides in the cell membrane. The enzyme catalyses ATP + protein L-histidine = ADP + protein N-phospho-L-histidine.. In terms of biological role, member of the two-component regulatory system NarS/NarL involved in gene expression during aerobic nitrate metabolism. Plays therefore a crucial role in anaerobic survival of mycobacteria in host. Functions as a sensor protein kinase which is autophosphorylated at a histidine residue and transfers its phosphate group to the conserved aspartic acid residue in the regulatory domain of NarL. In turn, NarL binds to the upstream promoter regions of target genes to regulate their expression during aerobic nitrate metabolism. This Mycobacterium tuberculosis (strain ATCC 25618 / H37Rv) protein is Sensor histidine kinase NarS.